The primary structure comprises 158 residues: Transcriptional repressor NrdR (158 aa).

Residues 1–20 (MRCPYCQSEDTQVKDSRPAE) are disordered. The segment at 3–34 (CPYCQSEDTQVKDSRPAEDGAVIRRRRVCSVC) is a zinc-finger region. Residues 11 to 20 (TQVKDSRPAE) are compositionally biased toward basic and acidic residues. The 91-residue stretch at 49–139 (LMVVKKSGRR…VYRNFSKAVD (91 aa)) folds into the ATP-cone domain.

The protein belongs to the NrdR family. It depends on Zn(2+) as a cofactor.

In terms of biological role, negatively regulates transcription of bacterial ribonucleotide reductase nrd genes and operons by binding to NrdR-boxes. The protein is Transcriptional repressor NrdR of Brucella anthropi (strain ATCC 49188 / DSM 6882 / CCUG 24695 / JCM 21032 / LMG 3331 / NBRC 15819 / NCTC 12168 / Alc 37) (Ochrobactrum anthropi).